The sequence spans 72 residues: Conotoxin Vc6.16 (72 aa).

An N-terminal signal peptide occupies residues methionine 1–alanine 19. Positions leucine 20 to glutamine 44 are excised as a propeptide. 3 disulfides stabilise this stretch: cysteine 48–cysteine 62, cysteine 55–cysteine 66, and cysteine 61–cysteine 71.

Belongs to the conotoxin O2 superfamily. In terms of tissue distribution, expressed by the venom duct.

It is found in the secreted. In terms of biological role, inhibits voltage-gated ion channels. The protein is Conotoxin Vc6.16 of Conus victoriae (Queen Victoria cone).